Consider the following 358-residue polypeptide: Alanine racemase (358 aa).

The Proton acceptor; specific for D-alanine role is filled by lysine 35. Position 35 is an N6-(pyridoxal phosphate)lysine (lysine 35). Arginine 130 contributes to the substrate binding site. Tyrosine 255 functions as the Proton acceptor; specific for L-alanine in the catalytic mechanism. Position 303 (methionine 303) interacts with substrate.

The protein belongs to the alanine racemase family. Pyridoxal 5'-phosphate is required as a cofactor.

The enzyme catalyses L-alanine = D-alanine. Its pathway is amino-acid biosynthesis; D-alanine biosynthesis; D-alanine from L-alanine: step 1/1. Functionally, catalyzes the interconversion of L-alanine and D-alanine. May also act on other amino acids. The chain is Alanine racemase (alr) from Shewanella sp. (strain MR-7).